Consider the following 138-residue polypeptide: Basic phospholipase A2 homolog TM-N49 (138 aa).

Positions 1 to 16 (MRTLWIMAVLLLGVEG) are cleaved as a signal peptide. Intrachain disulfides connect cysteine 42/cysteine 131, cysteine 44/cysteine 60, cysteine 59/cysteine 111, cysteine 65/cysteine 138, cysteine 66/cysteine 104, cysteine 73/cysteine 97, and cysteine 91/cysteine 102.

It belongs to the phospholipase A2 family. Group II subfamily. N49 sub-subfamily. In terms of assembly, homodimer; non-covalently linked. In terms of tissue distribution, expressed by the venom gland.

The protein localises to the secreted. Its function is as follows. Snake venom phospholipase A2 (PLA2) that exhibits potent myotoxic activity causing inflammatory cell infiltration, severe myoedema, myonecrosis and myolysis in the gastrocnemius muscles of BALB/c mice. This Protobothrops mucrosquamatus (Taiwan habu) protein is Basic phospholipase A2 homolog TM-N49.